The primary structure comprises 305 residues: MKDFQDQVAFITGGASGAGFGQAKVFGQAGAKIVVADVRAEAVEKAVAELEGLGITAHGIVLDIMDREAYARAADEVEAVFGQAPTLLSNTAGVNSFGPIEKTTYDDFDWIIGVNLNGVINGMVTFVPRMIASGRPGHIVTVSSLGGFMGSALAGPYSAAKAASINLMEGYRQGLEKYGIGVSVCTPANIKSNIAEASRLRPAKYGTSGYVENEESIASLHSIHQHGLEPEKLAEAIKKGVEDNALYIIPYPEVREGLEKHFQAIIDSVAPMESDPEGARQRVEALMAWGRDRTRVFAEGDKKGA.

10-34 (FITGGASGAGFGQAKVFGQAGAKIV) is an NAD(+) binding site. Position 144 (serine 144) interacts with substrate. Catalysis depends on tyrosine 157, which acts as the Proton acceptor.

The protein belongs to the short-chain dehydrogenases/reductases (SDR) family.

Its pathway is secondary metabolite metabolism; lignin degradation. Its function is as follows. Catalyzes the C alpha dehydrogenation of arylglycerol-beta-aryl ether (C alpha alcohol type) (compound IV). The polypeptide is C alpha-dehydrogenase (ligD) (Sphingobium sp. (strain NBRC 103272 / SYK-6)).